The following is a 505-amino-acid chain: Maturase K (505 aa).

This sequence belongs to the intron maturase 2 family. MatK subfamily.

The protein localises to the plastid. It is found in the chloroplast. Functionally, usually encoded in the trnK tRNA gene intron. Probably assists in splicing its own and other chloroplast group II introns. In Phaulothamnus spinescens (Snake-eyes), this protein is Maturase K.